Consider the following 125-residue polypeptide: Holo-[acyl-carrier-protein] synthase (125 aa).

2 residues coordinate Mg(2+): Asp-8 and Glu-60.

It belongs to the P-Pant transferase superfamily. AcpS family. Mg(2+) serves as cofactor.

The protein localises to the cytoplasm. The enzyme catalyses apo-[ACP] + CoA = holo-[ACP] + adenosine 3',5'-bisphosphate + H(+). Transfers the 4'-phosphopantetheine moiety from coenzyme A to a Ser of acyl-carrier-protein. The polypeptide is Holo-[acyl-carrier-protein] synthase (Wolbachia sp. subsp. Brugia malayi (strain TRS)).